We begin with the raw amino-acid sequence, 143 residues long: Sorting nexin-3 (143 aa).

A PX domain is found at 23 to 140; that stretch reads NILEIDVINP…SSFLQSPEFK (118 aa). 5 residues coordinate a 1,2-diacyl-sn-glycero-3-phospho-(1D-myo-inositol-3-phosphate): R66, S68, K92, R97, and R106.

This sequence belongs to the sorting nexin family.

The protein localises to the cytoplasm. It localises to the golgi apparatus membrane. It is found in the prevacuolar compartment membrane. Required for retention of late Golgi membrane proteins. Component of the retrieval machinery that functions by direct interaction with the cytosolic tails of certain TGN membrane proteins during the sorting/budding process at the prevacuolar compartment. Binds phosphatidylinositol 3-phosphate (PtdIns(P3)). The polypeptide is Sorting nexin-3 (snx3) (Schizosaccharomyces pombe (strain 972 / ATCC 24843) (Fission yeast)).